The sequence spans 331 residues: Phenylalanine--tRNA ligase alpha subunit (331 aa).

Residue E252 participates in Mg(2+) binding.

It belongs to the class-II aminoacyl-tRNA synthetase family. Phe-tRNA synthetase alpha subunit type 1 subfamily. Tetramer of two alpha and two beta subunits. It depends on Mg(2+) as a cofactor.

It localises to the cytoplasm. The enzyme catalyses tRNA(Phe) + L-phenylalanine + ATP = L-phenylalanyl-tRNA(Phe) + AMP + diphosphate + H(+). This chain is Phenylalanine--tRNA ligase alpha subunit, found in Xanthomonas euvesicatoria pv. vesicatoria (strain 85-10) (Xanthomonas campestris pv. vesicatoria).